A 165-amino-acid polypeptide reads, in one-letter code: MPSSYSFDVVSEFDQQELVNAIDQLRREVDQRYDLKDSKTKIDIKEDELSIVSLSDMTIESVKDILLQKATKRNLSLKIFDFQKIETIGGNMVMQIVKLKKGLSQEISKKLSKLVRDNMKKVTASIQGDSLRITGKNKDDLQAAINLIKKQEEELDIALQFQNYR.

This sequence belongs to the YajQ family.

In terms of biological role, nucleotide-binding protein. This Prochlorococcus marinus (strain NATL1A) protein is Nucleotide-binding protein NATL1_05371.